We begin with the raw amino-acid sequence, 122 residues long: Large ribosomal subunit protein bL12 (122 aa).

The protein belongs to the bacterial ribosomal protein bL12 family. In terms of assembly, homodimer. Part of the ribosomal stalk of the 50S ribosomal subunit. Forms a multimeric L10(L12)X complex, where L10 forms an elongated spine to which 2 to 4 L12 dimers bind in a sequential fashion. Binds GTP-bound translation factors.

Its function is as follows. Forms part of the ribosomal stalk which helps the ribosome interact with GTP-bound translation factors. Is thus essential for accurate translation. This is Large ribosomal subunit protein bL12 from Streptococcus mutans serotype c (strain ATCC 700610 / UA159).